Here is a 543-residue protein sequence, read N- to C-terminus: Light-independent protochlorophyllide reductase subunit B (543 aa).

[4Fe-4S] cluster is bound at residue Asp36. Asp287 (proton donor) is an active-site residue. Residue 422–423 (GL) participates in substrate binding.

Belongs to the ChlB/BchB/BchZ family. Protochlorophyllide reductase is composed of three subunits; BchL, BchN and BchB. Forms a heterotetramer of two BchB and two BchN subunits. Requires [4Fe-4S] cluster as cofactor.

The enzyme catalyses chlorophyllide a + oxidized 2[4Fe-4S]-[ferredoxin] + 2 ADP + 2 phosphate = protochlorophyllide a + reduced 2[4Fe-4S]-[ferredoxin] + 2 ATP + 2 H2O. Its pathway is porphyrin-containing compound metabolism; bacteriochlorophyll biosynthesis (light-independent). In terms of biological role, component of the dark-operative protochlorophyllide reductase (DPOR) that uses Mg-ATP and reduced ferredoxin to reduce ring D of protochlorophyllide (Pchlide) to form chlorophyllide a (Chlide). This reaction is light-independent. The NB-protein (BchN-BchB) is the catalytic component of the complex. The chain is Light-independent protochlorophyllide reductase subunit B from Rubrivivax gelatinosus (strain NBRC 100245 / IL144).